We begin with the raw amino-acid sequence, 191 residues long: dTTP/UTP pyrophosphatase (191 aa).

Aspartate 68 (proton acceptor) is an active-site residue.

Belongs to the Maf family. YhdE subfamily. A divalent metal cation is required as a cofactor.

Its subcellular location is the cytoplasm. It carries out the reaction dTTP + H2O = dTMP + diphosphate + H(+). It catalyses the reaction UTP + H2O = UMP + diphosphate + H(+). Nucleoside triphosphate pyrophosphatase that hydrolyzes dTTP and UTP. May have a dual role in cell division arrest and in preventing the incorporation of modified nucleotides into cellular nucleic acids. The chain is dTTP/UTP pyrophosphatase from Thermoanaerobacter pseudethanolicus (strain ATCC 33223 / 39E) (Clostridium thermohydrosulfuricum).